The sequence spans 208 residues: Probable GTP-binding protein EngB (208 aa).

One can recognise an EngB-type G domain in the interval 29–203 (EGREVAFAGR…WDKLGEWLGI (175 aa)). GTP-binding positions include 37–44 (GRSNAGKS), 64–68 (GRTQL), 82–85 (DLPG), 149–152 (TKAD), and 182–184 (FSA). Residues Ser44 and Thr66 each coordinate Mg(2+).

Belongs to the TRAFAC class TrmE-Era-EngA-EngB-Septin-like GTPase superfamily. EngB GTPase family. Mg(2+) serves as cofactor.

In terms of biological role, necessary for normal cell division and for the maintenance of normal septation. The sequence is that of Probable GTP-binding protein EngB from Alcanivorax borkumensis (strain ATCC 700651 / DSM 11573 / NCIMB 13689 / SK2).